Reading from the N-terminus, the 501-residue chain is L-arabinose isomerase (501 aa).

Residues glutamate 306, glutamate 333, histidine 350, and histidine 450 each contribute to the Mn(2+) site.

Belongs to the arabinose isomerase family. Homohexamer. Mn(2+) is required as a cofactor.

The enzyme catalyses beta-L-arabinopyranose = L-ribulose. The protein operates within carbohydrate degradation; L-arabinose degradation via L-ribulose; D-xylulose 5-phosphate from L-arabinose (bacterial route): step 1/3. Catalyzes the conversion of L-arabinose to L-ribulose. The polypeptide is L-arabinose isomerase (Erwinia tasmaniensis (strain DSM 17950 / CFBP 7177 / CIP 109463 / NCPPB 4357 / Et1/99)).